The sequence spans 240 residues: Ribonuclease P protein component 3 (240 aa).

Belongs to the eukaryotic/archaeal RNase P protein component 3 family. In terms of assembly, consists of a catalytic RNA component and at least 4-5 protein subunits.

Its subcellular location is the cytoplasm. The catalysed reaction is Endonucleolytic cleavage of RNA, removing 5'-extranucleotides from tRNA precursor.. Its function is as follows. Part of ribonuclease P, a protein complex that generates mature tRNA molecules by cleaving their 5'-ends. In Halorubrum lacusprofundi (strain ATCC 49239 / DSM 5036 / JCM 8891 / ACAM 34), this protein is Ribonuclease P protein component 3.